Here is a 200-residue protein sequence, read N- to C-terminus: Pre-mRNA cleavage factor Im 25 kDa subunit 2 (200 aa).

Positions 45-172 (GMRTSVEGIL…KLLAVPLFEL (128 aa)) constitute a Nudix hydrolase domain. The interval 72–74 (TFC) is interaction with RNA. Residues 79-100 (GRLKPGENEADGLKRKLTSKLG) carry the Nudix box motif.

It belongs to the Nudix hydrolase family. CPSF5 subfamily. Homodimer. Component of the cleavage factor Im (CFIm) complex. Forms a complex with cleavage and polyadenylation specificity factor (CPSF) subunits FIPS5, PAPS4 and CPSF30.

It localises to the nucleus. In terms of biological role, component of the cleavage factor Im (CFIm) complex that plays a key role in pre-mRNA 3'-processing. Involved in association with CPSF6 or CPSF7 in pre-MRNA 3'-end poly(A) site cleavage and poly(A) addition. NUDT21/CPSF5 binds to cleavage and polyadenylation RNA substrates. The homodimer mediates simultaneous sequence-specific recognition of two 5'-UGUA-3' elements within the pre-mRNA. Binds to, but does not hydrolyze mono- and di-adenosine nucleotides. May have a role in mRNA export. This chain is Pre-mRNA cleavage factor Im 25 kDa subunit 2, found in Arabidopsis thaliana (Mouse-ear cress).